The primary structure comprises 1587 residues: MSDADPFDMSDDDDNSVLSHTPPKKQKKAPTTKKGGSKPLADVENESFMDGIEESNNQDKDTNVSEKYQKLTQLEHIIKRPDTYVGSTERTTQHMWVYSSESEGMEYREVSYVPGLYKIFDEIVVNAADNKQNDKNMDEIRVTIDRESGEISVWNNGRGIPIEMHSKEKMYVPELIFGHLLTSSNYDDTQMKVTGGRNGFGAKLCNVFSTEFTIETQDSRQKKKYKQTWTENMTKMGKAKITDAKGADYTKVTFKPDYAKFGMTGMDDDFEALVKRRVYDLAGTAKVAVKLNGSRIPIRNFKMYMEMYTKAIRRERGDMGPAGKNEIITCSPDPRWEVGFAVSDGAFQQVSFVNSIAITSGGTHVNYIADQICSKLAEQVKKKNKNGATLKPAQIRNHIFIFVNALIVNPAFTSQTKEQLTTKQSQFGSKCVLEEDFYKKILKTEVMTNILHFAQQKADQMLKKTDGGRRSRMNNPKLTDANKAGTKEGHHCTLILTEGDSAKGLAMAGRAVVGPDLFGVFPLRGKLLNVRDASFDQIAKNQEIQNIKNFIGLQHKKEYTDTRGLRYGHLMITTDQDHDGSHIKGLLINFLQAQFPSLLKIPEFLIEFITPIVKVWKGDPKNPTKQRSFFTMPEYEAWKEEHGHERGWEHKYYKGLGTSTTEDAQIYFRDLDRHLKEFHTMQDNEVELIELAFSKKKADERKGNVRQFRPGTFLDHSVDKITYTDFINKELILFSMADNIRSIPSVVDGLKPGQRKVLYTCFRRNLKKDMKVVELAGHVSGTTAYQHGEGSLQQTIVGLAQTFVGSNNVNCLEPSGNFGSRLQGGADCASARYIYTRLWPFARRVFHNHDDPLLTYNEDDGAKIEQEVYVPVVPMILINGADGIGTGWSSSTPNYNPEDIVENLKRMMDGEPLKPMQPWFRGFTGEVTAVGQDRFKFSGIIKETGDKEVEITELPIRTWTQDFKDKLEDIIKAEKTPSFIKDYKDYNTHTKVHFVIQMDEKHMKTAIAEGLEEKFKLSKTMTTTNLVAFDPERITKYASVEDIMKEFYAVRLKYYERRKQYQLSEMQKELDKLSNQARFVQMIIDGKLVISKKKKAVLVAELKEKDFKPFPKVKEAVKAGETEPVVEEEEDSESGDTEVLSNSYDYLLGMPIWSLTQERVEKLRRQIGDKELEIDTLIKLSKEDIWKRDLEDFINEWRFQNDEEARRQRKVANMGRRTSSKLMTTGRGGGAAARKRKAALGDDPDDEDFAAPKSKKSAAAKKTESKGGGLLSFLGKSSAKPKPSPADGGDSDDDFDMEIMPKKSRGAPKSEPKADPKPKDEDEDIVMEDSDIEEIIPKKSRGSSKPSVKPESEDGQAKIAEAPKRGRAAAKPKPKPKSEDEEDELDDDDFMEITKAEAAKPSAQPARSGRKTTKYAELSDSDSDNGDDLLGDVSKMVKGIGSTNGASTSDSRLLFSERSRPGSSAGLKTTASKASKPSEFDADETDYSKLVPSNTPRRSLQVKPKDAKVSDDNEPEDDDDEPVKPAAKGKAAAKGKSTAAAANQLLQRLVVGRRKMLPKPPPRLPCPLPQRRTHRSNPRPRRPRRRS.

The segment covering 1-15 (MSDADPFDMSDDDDN) has biased composition (acidic residues). The segment at 1 to 47 (MSDADPFDMSDDDDNSVLSHTPPKKQKKAPTTKKGGSKPLADVENES) is disordered. The segment covering 22–31 (PPKKQKKAPT) has biased composition (basic residues). ATP is bound by residues Asn126, Asn155, 183–185 (SSN), and 196–203 (GRNGFGAK). 2 interaction with DNA regions span residues 381-383 (KKK) and 381-386 (KKKNKN). Residue 415 to 417 (QTK) coordinates ATP. A disordered region spans residues 461–485 (MLKKTDGGRRSRMNNPKLTDANKAG). The Toprim domain occupies 492 to 606 (CTLILTEGDS…SLLKIPEFLI (115 aa)). 3 residues coordinate Mg(2+): Glu498, Asp575, and Asp577. The Topo IIA-type catalytic domain maps to 743–1190 (IPSVVDGLKP…SKEDIWKRDL (448 aa)). Tyr833 (O-(5'-phospho-DNA)-tyrosine intermediate) is an active-site residue. The interaction with DNA stretch occupies residues 1016–1025 (KLSKTMTTTN). Residues 1204–1587 (EARRQRKVAN…PRPRRPRRRS (384 aa)) form a disordered region. Residues 1271–1280 (LSFLGKSSAK) are compositionally biased toward low complexity. Residues 1308-1320 (PKSEPKADPKPKD) are compositionally biased toward basic and acidic residues. Positions 1321 to 1334 (EDEDIVMEDSDIEE) are enriched in acidic residues. The segment covering 1348–1364 (VKPESEDGQAKIAEAPK) has biased composition (basic and acidic residues). Residues 1365-1375 (RGRAAAKPKPK) show a composition bias toward basic residues. 2 stretches are compositionally biased toward acidic residues: residues 1379–1391 (EDEE…DDFM) and 1419–1430 (SDSDSDNGDDLL). 2 stretches are compositionally biased toward polar residues: residues 1441–1451 (GSTNGASTSDS) and 1466–1475 (GLKTTASKAS). The span at 1512-1521 (DNEPEDDDDE) shows a compositional bias: acidic residues. The segment covering 1524-1542 (KPAAKGKAAAKGKSTAAAA) has biased composition (low complexity). Positions 1558 to 1568 (PKPPPRLPCPL) are enriched in pro residues. Over residues 1571-1587 (RRTHRSNPRPRRPRRRS) the composition is skewed to basic residues.

This sequence belongs to the type II topoisomerase family. In terms of assembly, homodimer. It depends on Mg(2+) as a cofactor. Requires Mn(2+) as cofactor. Ca(2+) serves as cofactor.

The protein resides in the nucleus. It catalyses the reaction ATP-dependent breakage, passage and rejoining of double-stranded DNA.. Its function is as follows. Control of topological states of DNA by transient breakage and subsequent rejoining of DNA strands. Topoisomerase II makes double-strand breaks. This is DNA topoisomerase 2 (TOP2) from Penicillium chrysogenum (Penicillium notatum).